The chain runs to 583 residues: MNNPQLTTVWSSVMVEELIRQGASFFCISPGSRSTPLTAAIARNPEASWKMFPDERSAGFFALGHARATGFPAVLVCTSGTAVANYLPAVVEASNDRIPMLILSADRPFELRECGANQTIRQNGIFGTFTRWQMELPEPSTSIPLQSLLSTIAHGVEKSLNSPRGPVHLNQPFREPFEPESCSTPEPWLEPLQAWQTGRRPSTVAAQPEKHPDMDSMRTLRELTGNARQPLIIAGNSTDENDSHAIAELADDLQVPLYADMTSGLRFSSSILPWQQAFASPEFRNAFRPDLVIHFGGGLISRHPSDALKQWKPDHLAVIRNHPGRYSPDHSVTLSIEASLRLTADALRGCRTGASALMAPAKRFFTEADREIAAATAPDLPVSEIGTARIVSELLPPDHLLFLSNSMPVRAMDSYAHTGKENPIKTGTNRGASGIDGIISTAAGFAEGHGQPLCLMIGDLAFLHDLNALSLINSLRVPIQLILLNNNGGGIFSFLPVSEFDDIFEPNFATPQNFSGRPAAAMFGLDYTAPLTNSEFRESLLSALNSNRSTIIEVVCSRSENVRLHRALQARLGLLATEAFFIP.

It belongs to the TPP enzyme family. MenD subfamily. As to quaternary structure, homodimer. Requires Mg(2+) as cofactor. Mn(2+) is required as a cofactor. The cofactor is thiamine diphosphate.

The enzyme catalyses isochorismate + 2-oxoglutarate + H(+) = 5-enolpyruvoyl-6-hydroxy-2-succinyl-cyclohex-3-ene-1-carboxylate + CO2. The protein operates within quinol/quinone metabolism; 1,4-dihydroxy-2-naphthoate biosynthesis; 1,4-dihydroxy-2-naphthoate from chorismate: step 2/7. It participates in quinol/quinone metabolism; menaquinone biosynthesis. Functionally, catalyzes the thiamine diphosphate-dependent decarboxylation of 2-oxoglutarate and the subsequent addition of the resulting succinic semialdehyde-thiamine pyrophosphate anion to isochorismate to yield 2-succinyl-5-enolpyruvyl-6-hydroxy-3-cyclohexene-1-carboxylate (SEPHCHC). This is 2-succinyl-5-enolpyruvyl-6-hydroxy-3-cyclohexene-1-carboxylate synthase from Chlorobium phaeovibrioides (strain DSM 265 / 1930) (Prosthecochloris vibrioformis (strain DSM 265)).